The following is a 320-amino-acid chain: Carbonic anhydrase 6 (320 aa).

A signal peptide spans Met1–Ala17. The region spanning Ser21–Phe278 is the Alpha-carbonic anhydrase domain. A disulfide bridge links Cys42 with Cys224. The active-site Proton donor/acceptor is His85. His111, His113, and His138 together coordinate Zn(2+). A substrate-binding site is contributed by Thr220 to Thr221. The N-linked (GlcNAc...) asparagine glycan is linked to Asn256.

It belongs to the alpha-carbonic anhydrase family. Requires Zn(2+) as cofactor.

It localises to the secreted. It carries out the reaction hydrogencarbonate + H(+) = CO2 + H2O. Its function is as follows. Reversible hydration of carbon dioxide. Its role in saliva is unknown. The sequence is that of Carbonic anhydrase 6 (CA6) from Canis lupus familiaris (Dog).